The chain runs to 777 residues: Ribosome-releasing factor 2, mitochondrial (777 aa).

The 286-residue stretch at 68–353 (AKIRNIGIMA…AVTMYLPSPE (286 aa)) folds into the tr-type G domain. GTP-binding positions include 77–84 (AHIDAGKT), 141–145 (DTPGH), and 195–198 (NKMD).

This sequence belongs to the TRAFAC class translation factor GTPase superfamily. Classic translation factor GTPase family. EF-G/EF-2 subfamily.

It localises to the mitochondrion. It catalyses the reaction GTP + H2O = GDP + phosphate + H(+). Its function is as follows. Mitochondrial GTPase that mediates the disassembly of ribosomes from messenger RNA at the termination of mitochondrial protein biosynthesis. Acts in collaboration with MRRF. GTP hydrolysis follows the ribosome disassembly and probably occurs on the ribosome large subunit. Not involved in the GTP-dependent ribosomal translocation step during translation elongation. This Pongo abelii (Sumatran orangutan) protein is Ribosome-releasing factor 2, mitochondrial.